The following is a 620-amino-acid chain: Apoptosis regulator MC163R (620 aa).

The helical transmembrane segment at 113–133 threads the bilayer; it reads APLPLLLLPLLLPPMILLFFL.

It localises to the host mitochondrion. The protein resides in the host membrane. In terms of biological role, plays a role in the inhibition of host apoptosis. Prevents host TNF-alpha-induced mitochondrial membrane permeabilization and reduces caspase-3/CASP3 and PARP1 cleavage induced by the intrinsic apoptotic pathway. The sequence is that of Apoptosis regulator MC163R (MC163R) from Homo sapiens (Human).